The chain runs to 343 residues: Globoside alpha-1,3-N-acetylgalactosaminyltransferase 1 (343 aa).

Residues 1-6 lie on the Cytoplasmic side of the membrane; that stretch reads MISRKA. A helical; Signal-anchor for type II membrane protein transmembrane segment spans residues 7–27; it reads LGSLVCLSAVATLIWIASGNW. Topologically, residues 28-343 are lumenal; that stretch reads KVHYLPYYLP…VDKNYQEVRN (316 aa). Asn104 is a glycosylation site (N-linked (GlcNAc...) asparagine). Substrate contacts are provided by residues 112 to 117, 202 to 204, and 224 to 227; these read FAVGKY, DID, and HPGY. Mn(2+) is bound by residues Asp202 and Asp204. Glu294 serves as the catalytic Nucleophile.

The protein belongs to the glycosyltransferase 6 family. Mn(2+) is required as a cofactor.

Its subcellular location is the golgi apparatus membrane. Its pathway is protein modification; protein glycosylation. May catalyze the formation of some glycolipid via the addition of N-acetylgalactosamine (GalNAc) in alpha-1,3-linkage to some substrate. Glycolipids probably serve for adherence of some pathogens. The sequence is that of Globoside alpha-1,3-N-acetylgalactosaminyltransferase 1 from Gallus gallus (Chicken).